Here is a 247-residue protein sequence, read N- to C-terminus: tRNA pseudouridine synthase A (247 aa).

Asp52 serves as the catalytic Nucleophile. Tyr113 contacts substrate.

It belongs to the tRNA pseudouridine synthase TruA family. Homodimer.

It carries out the reaction uridine(38/39/40) in tRNA = pseudouridine(38/39/40) in tRNA. Formation of pseudouridine at positions 38, 39 and 40 in the anticodon stem and loop of transfer RNAs. This Bartonella tribocorum (strain CIP 105476 / IBS 506) protein is tRNA pseudouridine synthase A.